Reading from the N-terminus, the 31-residue chain is Cytochrome b6-f complex subunit 6 (31 aa).

The helical transmembrane segment at 4-26 threads the bilayer; that stretch reads ITSYFGFLLTALTITSALFIGLS.

Belongs to the PetL family. As to quaternary structure, the 4 large subunits of the cytochrome b6-f complex are cytochrome b6, subunit IV (17 kDa polypeptide, PetD), cytochrome f and the Rieske protein, while the 4 small subunits are PetG, PetL, PetM and PetN. The complex functions as a dimer.

It is found in the plastid. The protein resides in the chloroplast thylakoid membrane. Component of the cytochrome b6-f complex, which mediates electron transfer between photosystem II (PSII) and photosystem I (PSI), cyclic electron flow around PSI, and state transitions. PetL is important for photoautotrophic growth as well as for electron transfer efficiency and stability of the cytochrome b6-f complex. This chain is Cytochrome b6-f complex subunit 6, found in Lactuca sativa (Garden lettuce).